A 151-amino-acid chain; its full sequence is Ribosome maturation factor RimP (151 aa).

Belongs to the RimP family.

It localises to the cytoplasm. Required for maturation of 30S ribosomal subunits. The polypeptide is Ribosome maturation factor RimP (Thermoanaerobacter sp. (strain X514)).